The sequence spans 102 residues: NADH-quinone oxidoreductase subunit K (102 aa).

Transmembrane regions (helical) follow at residues 6 to 26 (LEHG…GLMV), 30 to 50 (ILFV…AFIV), and 62 to 82 (VMFI…LAIL).

It belongs to the complex I subunit 4L family. As to quaternary structure, NDH-1 is composed of 13 different subunits. Subunits NuoA, H, J, K, L, M, N constitute the membrane sector of the complex.

The protein resides in the cell inner membrane. The enzyme catalyses a quinone + NADH + 5 H(+)(in) = a quinol + NAD(+) + 4 H(+)(out). In terms of biological role, NDH-1 shuttles electrons from NADH, via FMN and iron-sulfur (Fe-S) centers, to quinones in the respiratory chain. The immediate electron acceptor for the enzyme in this species is believed to be ubiquinone. Couples the redox reaction to proton translocation (for every two electrons transferred, four hydrogen ions are translocated across the cytoplasmic membrane), and thus conserves the redox energy in a proton gradient. This is NADH-quinone oxidoreductase subunit K from Pseudomonas fluorescens (strain SBW25).